Reading from the N-terminus, the 637-residue chain is Neutral ceramidase (637 aa).

Residue histidine 34 participates in Mg(2+) binding. 2 residues coordinate Zn(2+): histidine 96 and histidine 204. Serine 256 functions as the Nucleophile in the catalytic mechanism. Zn(2+) contacts are provided by glutamate 417 and tyrosine 453. Aspartate 575, aspartate 577, and threonine 580 together coordinate Mg(2+).

The protein belongs to the neutral ceramidase family. Zn(2+) serves as cofactor. It depends on Mg(2+) as a cofactor.

It catalyses the reaction an N-acylsphing-4-enine + H2O = sphing-4-enine + a fatty acid. The catalysed reaction is an N-acylsphinganine + H2O = sphinganine + a fatty acid. The enzyme catalyses an N-acyl-(4R)-4-hydroxysphinganine + H2O = (4R)-hydroxysphinganine + a fatty acid. It carries out the reaction N-(9Z-octadecenoyl)-sphing-4-enine + H2O = sphing-4-enine + (9Z)-octadecenoate. It catalyses the reaction N-(hexanoyl)sphing-4-enine + H2O = hexanoate + sphing-4-enine. The catalysed reaction is N-hexadecanoylsphing-4-enine + H2O = sphing-4-enine + hexadecanoate. The enzyme catalyses N-octadecanoylsphing-4-enine + H2O = sphing-4-enine + octadecanoate. It carries out the reaction N-eicosanoyl-sphing-4-enine + H2O = eicosanoate + sphing-4-enine. It catalyses the reaction N-(15Z-tetracosenoyl)-sphing-4-enine + H2O = (15Z)-tetracosenoate + sphing-4-enine. The catalysed reaction is N-tetracosanoyl-sphing-4-enine + H2O = tetracosanoate + sphing-4-enine. Its activity is regulated as follows. 90% of activity is inhibited by nickel, zinc and calcium ions. Magnesium, cobalt, copper and manganese ions inhibit between 50 and 80% of activity. Its function is as follows. Catalyzes the cleavage of the N-acyl linkage of the ceramides (Cers) to yield sphingosine (Sph) and free fatty acid. Also catalyzes the synthesis of Cers from Sph and fatty acid. Cers containning C6-C24 fatty acids are well hydrolyzed, and Cers with mono unsaturated fatty acids are much more hydrolyzed than those with saturated fatty acids. This chain is Neutral ceramidase, found in Mycobacterium tuberculosis (strain ATCC 25618 / H37Rv).